The following is a 317-amino-acid chain: METWQEVTVHVHRDAQEAVSHVLIETGSQGVAIADSADYIGQKDRFGELYPDVEQSDMIAITAYYPSSTNLADIIATINEQLAELASFGLQVGQVTVDSQELAEEDWADNWKKYYEPARITHDLTIVPSWTDYDASAGEKVIKLDPGMAFGTGTHPTTKMSLFALEQILRGGETVIDVGTGSGVLSIASSLLGAKTIYAYDLDDVAVRVAQDNIDLNQGTDNIHVAAGDLLKGVSQEADVIVANILADILVLLTDDAYRLVKKEGYLILSGIISEKLDMVLEAAFSAGFFLETHMVQGEWNALVFKKTDDISGVIGG.

Thr158, Gly179, Asp201, and Asn244 together coordinate S-adenosyl-L-methionine.

It belongs to the methyltransferase superfamily. PrmA family.

Its subcellular location is the cytoplasm. It carries out the reaction L-lysyl-[protein] + 3 S-adenosyl-L-methionine = N(6),N(6),N(6)-trimethyl-L-lysyl-[protein] + 3 S-adenosyl-L-homocysteine + 3 H(+). In terms of biological role, methylates ribosomal protein L11. The sequence is that of Ribosomal protein L11 methyltransferase from Streptococcus pyogenes serotype M1.